Consider the following 362-residue polypeptide: Phospho-N-acetylmuramoyl-pentapeptide-transferase (362 aa).

Helical transmembrane passes span 18–38 (VFGY…AISL), 73–93 (TMGG…WGDL), 97–117 (YVWV…VDDW), 134–154 (YFWT…SATT), 160–180 (LIVP…FIAL), 200–220 (GLAI…AYVA), 237–257 (AGEL…FLWF), 264–284 (VFMG…IAVV), 289–309 (IVLF…MVQV), and 339–359 (QVVV…LSTL).

Belongs to the glycosyltransferase 4 family. MraY subfamily. Mg(2+) is required as a cofactor.

The protein localises to the cell inner membrane. The enzyme catalyses UDP-N-acetyl-alpha-D-muramoyl-L-alanyl-gamma-D-glutamyl-meso-2,6-diaminopimeloyl-D-alanyl-D-alanine + di-trans,octa-cis-undecaprenyl phosphate = di-trans,octa-cis-undecaprenyl diphospho-N-acetyl-alpha-D-muramoyl-L-alanyl-D-glutamyl-meso-2,6-diaminopimeloyl-D-alanyl-D-alanine + UMP. It participates in cell wall biogenesis; peptidoglycan biosynthesis. Catalyzes the initial step of the lipid cycle reactions in the biosynthesis of the cell wall peptidoglycan: transfers peptidoglycan precursor phospho-MurNAc-pentapeptide from UDP-MurNAc-pentapeptide onto the lipid carrier undecaprenyl phosphate, yielding undecaprenyl-pyrophosphoryl-MurNAc-pentapeptide, known as lipid I. The sequence is that of Phospho-N-acetylmuramoyl-pentapeptide-transferase from Azoarcus sp. (strain BH72).